Here is a 434-residue protein sequence, read N- to C-terminus: D-amino acid dehydrogenase (434 aa).

Residue 3–17 (VIVLGSGVIGTTTAY) coordinates FAD.

It belongs to the DadA oxidoreductase family. The cofactor is FAD.

It carries out the reaction a D-alpha-amino acid + A + H2O = a 2-oxocarboxylate + AH2 + NH4(+). Functionally, oxidative deamination of D-amino acids. In Bordetella bronchiseptica (strain ATCC BAA-588 / NCTC 13252 / RB50) (Alcaligenes bronchisepticus), this protein is D-amino acid dehydrogenase.